We begin with the raw amino-acid sequence, 643 residues long: RNA-binding protein MEX3D (643 aa).

Disordered regions lie at residues Met-1–Ala-48 and Gly-61–Asp-92. Over residues Thr-18–Asp-34 the composition is skewed to low complexity. Residues Cys-83–Asp-92 are compositionally biased toward acidic residues. KH domains lie at Met-160 to Ile-221 and Gln-253 to Ile-314. Disordered regions lie at residues Pro-357–Thr-427, Gly-471–Ser-505, and Val-519–Pro-583. The span at Gly-405–Gly-418 shows a compositional bias: gly residues. A Phosphothreonine modification is found at Thr-491. The residue at position 495 (Ser-495) is a Phosphoserine. Composition is skewed to low complexity over residues Ser-495–Ser-505, Leu-531–Leu-556, and Pro-567–Pro-583. The RING-type zinc finger occupies Cys-592–Arg-632.

The protein resides in the cytoplasm. Its subcellular location is the nucleus. Functionally, RNA binding protein, may be involved in post-transcriptional regulatory mechanisms. The protein is RNA-binding protein MEX3D (Mex3d) of Mus musculus (Mouse).